A 162-amino-acid polypeptide reads, in one-letter code: Large ribosomal subunit protein bL17 (162 aa).

Over residues 125-140 (AAKEAPAKEVAEEKAA) the composition is skewed to basic and acidic residues. The interval 125–162 (AAKEAPAKEVAEEKAAKPAKKAAPKKAEKEEAEDAAEA) is disordered.

This sequence belongs to the bacterial ribosomal protein bL17 family. As to quaternary structure, part of the 50S ribosomal subunit. Contacts protein L32.

The sequence is that of Large ribosomal subunit protein bL17 from Oleidesulfovibrio alaskensis (strain ATCC BAA-1058 / DSM 17464 / G20) (Desulfovibrio alaskensis).